A 329-amino-acid polypeptide reads, in one-letter code: Glycerol-3-phosphate dehydrogenase [NAD(P)+] (329 aa).

NADPH-binding residues include tryptophan 11, arginine 30, and lysine 103. Sn-glycerol 3-phosphate contacts are provided by lysine 103, glycine 132, and serine 134. Alanine 136 is a binding site for NADPH. Sn-glycerol 3-phosphate contacts are provided by lysine 187, aspartate 240, serine 250, arginine 251, and asparagine 252. Catalysis depends on lysine 187, which acts as the Proton acceptor. Residue arginine 251 coordinates NADPH. Positions 275 and 277 each coordinate NADPH.

The protein belongs to the NAD-dependent glycerol-3-phosphate dehydrogenase family.

The protein resides in the cytoplasm. It catalyses the reaction sn-glycerol 3-phosphate + NAD(+) = dihydroxyacetone phosphate + NADH + H(+). The catalysed reaction is sn-glycerol 3-phosphate + NADP(+) = dihydroxyacetone phosphate + NADPH + H(+). The protein operates within membrane lipid metabolism; glycerophospholipid metabolism. Functionally, catalyzes the reduction of the glycolytic intermediate dihydroxyacetone phosphate (DHAP) to sn-glycerol 3-phosphate (G3P), the key precursor for phospholipid synthesis. This Methylobacillus flagellatus (strain ATCC 51484 / DSM 6875 / VKM B-1610 / KT) protein is Glycerol-3-phosphate dehydrogenase [NAD(P)+].